Here is an 840-residue protein sequence, read N- to C-terminus: Urease (840 aa).

The region spanning 402–840 (GAIDCHVHYI…VPLSRNYFLF (439 aa)) is the Urease domain. The Ni(2+) site is built by H407, H409, and K490. K490 bears the N6-carboxylysine mark. H492 serves as a coordination point for substrate. Ni(2+) contacts are provided by H519 and H545. Residue H593 is the Proton donor of the active site. Residue D633 participates in Ni(2+) binding.

This sequence in the C-terminal section; belongs to the metallo-dependent hydrolases superfamily. Urease alpha subunit family. Homohexamer. Other oligomeric forms may exist depending on pH and presence of salts. Ni cation is required as a cofactor. In terms of processing, carboxylation allows a single lysine to coordinate two nickel ions.

The enzyme catalyses urea + 2 H2O + H(+) = hydrogencarbonate + 2 NH4(+). It functions in the pathway nitrogen metabolism; urea degradation; CO(2) and NH(3) from urea (urease route): step 1/1. P-hydroxymercuribenzoate irreversibly abolishes ureolytic activity, but does not inhibit the ability to activate platelets. Also inhibited by acetohydroxamic acid (AHA), a chelator of Ni2+ and Zn2+ ions. Functionally, urea hydrolase involved in nitrogen recycling from ureide, purine, and arginine catabolism. Is known to be highly toxic and lethal when given by intravenous route, producing convulsions and other signs of central nervous system intoxication associated with the high levels of ammonia formed in the blood of mice and rabbits. Is neurotoxic in mammals, when directly injected into hippocampus. It may induce seizures by acting at a neuronal network level, thereby disturbing electroencephalographic rhythms and causing metabolic alterations in key areas related to epileptogenesis and to neurogenic pulmonary edema. It increases calcium influx and neuronal firing rate in the hippocampus. Is able to insert itself into lipid bilayers, altering physicochemical properties of artificial membranes, and forming cation-selective ion channels. In vitro, has the ability to induce platelet aggregation, platelet granules secretion and release of ATP. In contrast to canatoxin, another urease from C.ensiformis, is not lethal to mice when intraperitoneally injected. The chain is Urease from Canavalia ensiformis (Jack bean).